The sequence spans 239 residues: Ribosomal RNA large subunit methyltransferase E (239 aa).

The disordered stretch occupies residues 1 to 20 (MTKAPIAGNRTGRKLGQRVK). Residues 11–20 (TGRKLGQRVK) show a composition bias toward basic residues. S-adenosyl-L-methionine contacts are provided by glycine 81, tryptophan 83, aspartate 104, aspartate 120, and aspartate 144. Lysine 184 acts as the Proton acceptor in catalysis.

It belongs to the class I-like SAM-binding methyltransferase superfamily. RNA methyltransferase RlmE family.

It localises to the cytoplasm. The catalysed reaction is uridine(2552) in 23S rRNA + S-adenosyl-L-methionine = 2'-O-methyluridine(2552) in 23S rRNA + S-adenosyl-L-homocysteine + H(+). Specifically methylates the uridine in position 2552 of 23S rRNA at the 2'-O position of the ribose in the fully assembled 50S ribosomal subunit. The polypeptide is Ribosomal RNA large subunit methyltransferase E (Rhizobium leguminosarum bv. trifolii (strain WSM2304)).